Consider the following 218-residue polypeptide: Thiopurine S-methyltransferase (218 aa).

Residues W10, L45, E66, and R123 each contribute to the S-adenosyl-L-methionine site.

It belongs to the class I-like SAM-binding methyltransferase superfamily. TPMT family.

It localises to the cytoplasm. The catalysed reaction is S-adenosyl-L-methionine + a thiopurine = S-adenosyl-L-homocysteine + a thiopurine S-methylether.. This Xanthomonas euvesicatoria pv. vesicatoria (strain 85-10) (Xanthomonas campestris pv. vesicatoria) protein is Thiopurine S-methyltransferase.